A 177-amino-acid chain; its full sequence is Phycocyanin-645 beta chain (177 aa).

Residue Tyr-18 coordinates mesobiliverdin. Residues Lys-28, Asn-35, and Asp-39 each contribute to the (2R,3E)-phycocyanobilin site. The 15,16-dihydrobiliverdin site is built by Cys-50, Asp-54, and Cys-61. (2R,3E)-phycocyanobilin contacts are provided by Arg-77, Cys-82, Arg-84, and Asp-85. Gln-148 is a binding site for 15,16-dihydrobiliverdin. Positions 154, 156, and 158 each coordinate (2R,3E)-phycocyanobilin.

It belongs to the phycobiliprotein family. As to quaternary structure, heterotetramer of 2 different alpha chains and 2 identical beta chains which form 2 alpha-beta heterodimers within the heterotetramer. Contains two phycocyanobilin chromophores, one mesobiliverdin chromophore and one 15,16-dihydrobiliverdin chromophore with binding mediated by both the alpha and beta subunits.

It is found in the plastid. The protein resides in the chloroplast thylakoid membrane. Light-harvesting photosynthetic tetrapyrrole chromophore-protein from the phycobiliprotein complex. In Chroomonas sp, this protein is Phycocyanin-645 beta chain.